A 429-amino-acid polypeptide reads, in one-letter code: Enolase (429 aa).

Glutamine 162 contacts (2R)-2-phosphoglycerate. Glutamate 204 (proton donor) is an active-site residue. Aspartate 242, glutamate 289, and aspartate 316 together coordinate Mg(2+). 4 residues coordinate (2R)-2-phosphoglycerate: lysine 341, arginine 370, serine 371, and lysine 392. Lysine 341 acts as the Proton acceptor in catalysis.

Belongs to the enolase family. The cofactor is Mg(2+).

It localises to the cytoplasm. The protein resides in the secreted. The protein localises to the cell surface. It catalyses the reaction (2R)-2-phosphoglycerate = phosphoenolpyruvate + H2O. It participates in carbohydrate degradation; glycolysis; pyruvate from D-glyceraldehyde 3-phosphate: step 4/5. In terms of biological role, catalyzes the reversible conversion of 2-phosphoglycerate (2-PG) into phosphoenolpyruvate (PEP). It is essential for the degradation of carbohydrates via glycolysis. The chain is Enolase from Flavobacterium psychrophilum (strain ATCC 49511 / DSM 21280 / CIP 103535 / JIP02/86).